A 947-amino-acid polypeptide reads, in one-letter code: Pyruvate, phosphate dikinase 1, chloroplastic (947 aa).

A chloroplast-targeting transit peptide spans 1–62; the sequence is MAASVSRAIC…GRGQHCSPLR (62 aa). A disordered region spans residues 21–54; it reads DREATSFARRSVAAPRPPHAKAAGVIRSDSGAGR. Ala-63 is modified (N-acetylalanine; partial). Position 309 is a phosphothreonine (Thr-309). Phosphoserine is present on Ser-506. Phosphothreonine; by PDRP1 is present on Thr-527. Ser-528 is modified (phosphoserine; by PDRP1). The active-site Tele-phosphohistidine intermediate is the His-529. Substrate is bound by residues Arg-635, Arg-692, Glu-821, Gly-842, Thr-843, Asn-844, and Asp-845. Residue Glu-821 coordinates Mg(2+). Residue Asp-845 participates in Mg(2+) binding. Catalysis depends on Cys-907, which acts as the Proton donor.

It belongs to the PEP-utilizing enzyme family. As to quaternary structure, homotetramer. It depends on Mg(2+) as a cofactor. In terms of processing, phosphorylation of Thr-527 in the dark inactivates the enzyme, dephosphorylation upon light stimulation reactivates the enzyme. More highly phosphorylated when grown under high rather than low light regimes (70 vs 900 umol photons/m-2/s). the degree of phosphorylation is strictly regulated by light intensity and the light/dark transition has no influence. Phosphorylated in both mesophyll and bundle sheath cells. The phosphorylation at Ser-528 may be important for the phosphorylation at Thr-527 and may also be regulated by light intensity. In terms of tissue distribution, isoform C4PPDKZM1 mainly localized in mesophyll cells and only a low level is found in bundle sheath cells. Isoform CYPPDKZM1 expressed in roots, stems and etiolated leaves.

Its subcellular location is the plastid. It localises to the chloroplast. The protein localises to the cytoplasm. The enzyme catalyses pyruvate + phosphate + ATP = phosphoenolpyruvate + AMP + diphosphate + H(+). It participates in photosynthesis; C4 acid pathway. Its activity is regulated as follows. Activated by light-induced dephosphorylation. Inhibited by dark-induced phosphorylation. Both reactions are catalyzed by PDRP1. Inactivated by cold due to the dissociation of the homotetramer. Independent of circadian regulation. In terms of biological role, formation of phosphoenolpyruvate, which is the primary acceptor of CO(2) in C4 and some Crassulacean acid metabolism plants. The chain is Pyruvate, phosphate dikinase 1, chloroplastic from Zea mays (Maize).